The chain runs to 297 residues: MRSKPDWLKVKMPTGDTFYQVRNLMKLYKLNTVCEEAACPNIGECWNKRHATVMILGSTCTRACAFCNVVSGIPDKLDPHEPQNLAKAVGLLKLEHVVITSVDRDDLEDGGSGHFVECIEEIRKNDQNVTIEVLTPDFLNKHGAIEKVADAAPDVYNHNIETVPRLYAKIRPKARYFHSLYLLKTVKYKNPKVFTKSGIMVGLGETKEEIYQVMNDLRSADVDFITIGQYLQPTPKHAAVDRYVTPEEFDHYKYVAYSKGFLMVASGPLVRSSYHAGEDFQRLKKNRAAMFMHAKSN.

Residues Cys-34, Cys-39, Cys-45, Cys-60, Cys-64, Cys-67, and Ser-273 each contribute to the [4Fe-4S] cluster site. The Radical SAM core domain occupies 46 to 262 (WNKRHATVMI…KYVAYSKGFL (217 aa)).

It belongs to the radical SAM superfamily. Lipoyl synthase family. It depends on [4Fe-4S] cluster as a cofactor.

The protein resides in the cytoplasm. The catalysed reaction is [[Fe-S] cluster scaffold protein carrying a second [4Fe-4S](2+) cluster] + N(6)-octanoyl-L-lysyl-[protein] + 2 oxidized [2Fe-2S]-[ferredoxin] + 2 S-adenosyl-L-methionine + 4 H(+) = [[Fe-S] cluster scaffold protein] + N(6)-[(R)-dihydrolipoyl]-L-lysyl-[protein] + 4 Fe(3+) + 2 hydrogen sulfide + 2 5'-deoxyadenosine + 2 L-methionine + 2 reduced [2Fe-2S]-[ferredoxin]. Its pathway is protein modification; protein lipoylation via endogenous pathway; protein N(6)-(lipoyl)lysine from octanoyl-[acyl-carrier-protein]: step 2/2. Its function is as follows. Catalyzes the radical-mediated insertion of two sulfur atoms into the C-6 and C-8 positions of the octanoyl moiety bound to the lipoyl domains of lipoate-dependent enzymes, thereby converting the octanoylated domains into lipoylated derivatives. This Ehrlichia chaffeensis (strain ATCC CRL-10679 / Arkansas) protein is Lipoyl synthase.